The chain runs to 310 residues: Tryptophan 2,3-dioxygenase (310 aa).

The disordered stretch occupies residues methionine 1–proline 36. Low complexity predominate over residues serine 15–proline 36. Substrate-binding positions include phenylalanine 79–histidine 83, tyrosine 141, and arginine 145. Histidine 268 lines the heme pocket. A substrate-binding site is contributed by threonine 282.

The protein belongs to the tryptophan 2,3-dioxygenase family. Homotetramer. Heme is required as a cofactor.

It carries out the reaction L-tryptophan + O2 = N-formyl-L-kynurenine. It participates in amino-acid degradation; L-tryptophan degradation via kynurenine pathway; L-kynurenine from L-tryptophan: step 1/2. Its function is as follows. Heme-dependent dioxygenase that catalyzes the oxidative cleavage of the L-tryptophan (L-Trp) pyrrole ring and converts L-tryptophan to N-formyl-L-kynurenine. Catalyzes the oxidative cleavage of the indole moiety. This Burkholderia lata (strain ATCC 17760 / DSM 23089 / LMG 22485 / NCIMB 9086 / R18194 / 383) protein is Tryptophan 2,3-dioxygenase.